A 152-amino-acid chain; its full sequence is GLLGLGYGGYGGYGGYGGYGHGLALAAAPAAIAAPAVVAAPAIAHAPAVAVAPAVAHAPAAVSTVSQVSYGTTHYAPAVAKVAAIAAPVAVAAPAIAAAPAVGLGYGGYGHGLSLGYGHGLGLGYAAAPALSLGYGGYGHGLGYGGYGYGHH.

7 consecutive repeat copies span residues 27-30 (AAPA), 33-37 (AAPAV), 39-42 (AAPA), 86-89 (AAPV), 92-95 (AAPA), 98-101 (AAPA), and 127-130 (AAPA).

Its function is as follows. Component of the cuticle of migratory locust which contains more than 100 different structural proteins. The protein is Cuticle protein 64 of Locusta migratoria (Migratory locust).